Consider the following 123-residue polypeptide: Translation initiation factor 1A (123 aa).

Residues 1–11 (MSPDKTEDEDK) are compositionally biased toward acidic residues. A disordered region spans residues 1 to 26 (MSPDKTEDEDKDVNVDQDQFNEEEES). The S1-like domain occupies 28-102 (GRVILPNKKK…EKADVVYRYT (75 aa)).

This sequence belongs to the eIF-1A family.

In terms of biological role, seems to be required for maximal rate of protein biosynthesis. Enhances ribosome dissociation into subunits and stabilizes the binding of the initiator Met-tRNA(I) to 40 S ribosomal subunits. The sequence is that of Translation initiation factor 1A (eIF1A) from Thermoplasma volcanium (strain ATCC 51530 / DSM 4299 / JCM 9571 / NBRC 15438 / GSS1).